A 174-amino-acid polypeptide reads, in one-letter code: Gamma-crystallin C (174 aa).

Beta/gamma crystallin 'Greek key' domains follow at residues 2 to 40 and 41 to 83; these read GKIT…RVDS and GCWM…CLIP. S-methylcysteine is present on C23. Positions 84–87 are connecting peptide; that stretch reads QTSS. 2 consecutive Beta/gamma crystallin 'Greek key' domains span residues 88–128 and 129–171; these read HRLR…HVLE and GCWV…RRVV.

Belongs to the beta/gamma-crystallin family. As to quaternary structure, monomer.

In terms of biological role, crystallins are the dominant structural components of the vertebrate eye lens. The polypeptide is Gamma-crystallin C (CRYGC) (Canis lupus familiaris (Dog)).